The following is a 367-amino-acid chain: Pepsin A (367 aa).

Positions 1–42 (SIHRVPLKKGKSLRKQLKDHGLLEDFLKKHPYNPASKYHPVL) are cleaved as a propeptide — activation peptide. In terms of domain architecture, Peptidase A1 spans 59–364 (YYGTISIGTP…DRANNKVGLS (306 aa)). D77 is a catalytic residue. The cysteines at positions 90 and 95 are disulfide-linked. N113 is a glycosylation site (N-linked (GlcNAc...) asparagine). C251 and C255 are joined by a disulfide. The active site involves D260. Cysteines 290 and 323 form a disulfide.

This sequence belongs to the peptidase A1 family.

The enzyme catalyses Preferential cleavage: hydrophobic, preferably aromatic, residues in P1 and P1' positions. Cleaves 1-Phe-|-Val-2, 4-Gln-|-His-5, 13-Glu-|-Ala-14, 14-Ala-|-Leu-15, 15-Leu-|-Tyr-16, 16-Tyr-|-Leu-17, 23-Gly-|-Phe-24, 24-Phe-|-Phe-25 and 25-Phe-|-Tyr-26 bonds in the B chain of insulin.. Functionally, shows particularly broad specificity; although bonds involving phenylalanine and leucine are preferred, many others are also cleaved to some extent. This is Pepsin A (PGA) from Gallus gallus (Chicken).